Reading from the N-terminus, the 492-residue chain is Virion host shutoff protein (492 aa).

Disordered regions lie at residues 110-130 (EEAS…SRPS), 288-307 (SQAR…LESM), and 334-371 (EDDY…ELVQ).

The protein belongs to the herpesviridae VHS protein family. As to quaternary structure, interacts with human EIF4H, EIF4A1 and EIF4A2; interaction with eIF4AI and EIF4A2 presumably allows Vhs protein to associate with the eIF4F cap-binding complex.

It is found in the virion. In terms of biological role, minor structural protein that acts as an endoribonuclease during lytic infection. Degrades host mRNAs in the cytoplasm by cutting them at preferred sites, including some in regions of translation initiation. Together with inhibition of host splicing by ICP27, contributes to an overall decrease in host protein synthesis. Also, after the onset of viral transcription, accelerates the turnover of viral mRNA, thereby facilitating the sequential expression of different classes of viral genes. Binds translation initiation factors eIF4H, eIF4AI, and eIF4AII, thereby may interact directly with the translation initiation complex and thus digest specifically mRNAs. Also impedes antigen presentation by major histocompatibility complex class I and class II molecules, inhibits secretion of cytokines that would otherwise recruit lymphocytes and neutrophils cells to the site of infection and blocks the activation of dendritic cells. Impedes the alpha/beta interferon-mediated response to infection. Inhibits the integrated stress response (ISR) in the infected cell, this function requires the endonuclease activity. Stress granule formation is thus inhibited, which allows protein synthesis and viral replication. The chain is Virion host shutoff protein (UL41) from Homo sapiens (Human).